A 138-amino-acid polypeptide reads, in one-letter code: Small ribosomal subunit protein uS11c (138 aa).

The segment at 1-23 is disordered; the sequence is MAKPIQRIGSRRNGPIGSRKNGR.

It belongs to the universal ribosomal protein uS11 family. In terms of assembly, part of the 30S ribosomal subunit.

It localises to the plastid. The protein resides in the chloroplast. The chain is Small ribosomal subunit protein uS11c from Platanus occidentalis (Sycamore).